Here is a 354-residue protein sequence, read N- to C-terminus: 3-isopropylmalate dehydrogenase (354 aa).

73 to 86 (GPAYDKLDRPLRPE) serves as a coordination point for NAD(+). 4 residues coordinate substrate: Arg93, Arg103, Arg131, and Asp221. Mg(2+) contacts are provided by Asp221, Asp245, and Asp249. An NAD(+)-binding site is contributed by 279–291 (GSAPDIAGQNLAN).

The protein belongs to the isocitrate and isopropylmalate dehydrogenases family. LeuB type 1 subfamily. Homodimer. Mg(2+) serves as cofactor. Mn(2+) is required as a cofactor.

It localises to the cytoplasm. The enzyme catalyses (2R,3S)-3-isopropylmalate + NAD(+) = 4-methyl-2-oxopentanoate + CO2 + NADH. The protein operates within amino-acid biosynthesis; L-leucine biosynthesis; L-leucine from 3-methyl-2-oxobutanoate: step 3/4. Its function is as follows. Catalyzes the oxidation of 3-carboxy-2-hydroxy-4-methylpentanoate (3-isopropylmalate) to 3-carboxy-4-methyl-2-oxopentanoate. The product decarboxylates to 4-methyl-2 oxopentanoate. The protein is 3-isopropylmalate dehydrogenase of Chromobacterium violaceum (strain ATCC 12472 / DSM 30191 / JCM 1249 / CCUG 213 / NBRC 12614 / NCIMB 9131 / NCTC 9757 / MK).